The following is a 468-amino-acid chain: ATP synthase subunit beta (468 aa).

Position 155-162 (155-162 (GGAGVGKT)) interacts with ATP.

It belongs to the ATPase alpha/beta chains family. In terms of assembly, F-type ATPases have 2 components, CF(1) - the catalytic core - and CF(0) - the membrane proton channel. CF(1) has five subunits: alpha(3), beta(3), gamma(1), delta(1), epsilon(1). CF(0) has three main subunits: a(1), b(2) and c(9-12). The alpha and beta chains form an alternating ring which encloses part of the gamma chain. CF(1) is attached to CF(0) by a central stalk formed by the gamma and epsilon chains, while a peripheral stalk is formed by the delta and b chains.

The protein localises to the cell membrane. It catalyses the reaction ATP + H2O + 4 H(+)(in) = ADP + phosphate + 5 H(+)(out). Functionally, produces ATP from ADP in the presence of a proton gradient across the membrane. The catalytic sites are hosted primarily by the beta subunits. This is ATP synthase subunit beta from Streptococcus pneumoniae (strain CGSP14).